A 357-amino-acid polypeptide reads, in one-letter code: tRNA N6-adenosine threonylcarbamoyltransferase (357 aa).

His-115 and His-119 together coordinate Fe cation. Residues 137–141 (LASGG), Asp-170, Gly-183, and Asn-281 contribute to the substrate site. Fe cation is bound at residue Asp-309.

The protein belongs to the KAE1 / TsaD family. Fe(2+) serves as cofactor.

Its subcellular location is the cytoplasm. It catalyses the reaction L-threonylcarbamoyladenylate + adenosine(37) in tRNA = N(6)-L-threonylcarbamoyladenosine(37) in tRNA + AMP + H(+). Functionally, required for the formation of a threonylcarbamoyl group on adenosine at position 37 (t(6)A37) in tRNAs that read codons beginning with adenine. Is involved in the transfer of the threonylcarbamoyl moiety of threonylcarbamoyl-AMP (TC-AMP) to the N6 group of A37, together with TsaE and TsaB. TsaD likely plays a direct catalytic role in this reaction. The chain is tRNA N6-adenosine threonylcarbamoyltransferase from Afipia carboxidovorans (strain ATCC 49405 / DSM 1227 / KCTC 32145 / OM5) (Oligotropha carboxidovorans).